A 393-amino-acid polypeptide reads, in one-letter code: Acetyl-CoA acetyltransferase (393 aa).

The active-site Acyl-thioester intermediate is the C88. Active-site proton acceptor residues include H349 and C379.

This sequence belongs to the thiolase-like superfamily. Thiolase family.

It is found in the cytoplasm. The enzyme catalyses 2 acetyl-CoA = acetoacetyl-CoA + CoA. The protein operates within metabolic intermediate biosynthesis; (R)-mevalonate biosynthesis; (R)-mevalonate from acetyl-CoA: step 1/3. The sequence is that of Acetyl-CoA acetyltransferase (atoB) from Pseudomonas aeruginosa (strain ATCC 15692 / DSM 22644 / CIP 104116 / JCM 14847 / LMG 12228 / 1C / PRS 101 / PAO1).